We begin with the raw amino-acid sequence, 119 residues long: Basic phospholipase A2 taipoxin alpha chain (119 aa).

7 disulfide bridges follow: cysteine 11/cysteine 72, cysteine 27/cysteine 118, cysteine 29/cysteine 45, cysteine 44/cysteine 99, cysteine 51/cysteine 92, cysteine 61/cysteine 85, and cysteine 79/cysteine 90. Residues tyrosine 28, glycine 30, and glycine 32 each coordinate Ca(2+). Histidine 48 is an active-site residue. Ca(2+) is bound at residue aspartate 49. The active site involves aspartate 93.

This sequence belongs to the phospholipase A2 family. Group I subfamily. D49 sub-subfamily. In terms of assembly, heterotrimer of alpha, beta, and gamma chains; non-covalently linked. The cofactor is Ca(2+). Expressed by the venom gland.

The protein localises to the secreted. The enzyme catalyses a 1,2-diacyl-sn-glycero-3-phosphocholine + H2O = a 1-acyl-sn-glycero-3-phosphocholine + a fatty acid + H(+). Heterotrimer: Snake venom phospholipase A2 (PLA2) heterotrimer that acts as a potent presynaptic neurotoxin by blocking synaptic transmission and synaptic vesicle recycling. May act by binding in a calcium-dependent fashion to neurotonal pentraxin-1 (NPTX1) and neurotonal pentraxin-2 (NPTX2), but not to neuronal pentraxin receptor (NPTXR). Also binds to taipoxin-associated calcium binding protein 49 (RCN2), a protein localized in the lumen of endoplasmic reticulum. Functionally, monomer (alpha chain): Snake venom phospholipase A2 (PLA2) alpha chain that possesses the same high enzymatic activity as the heterotrimer. PLA2 catalyzes the calcium-dependent hydrolysis of the 2-acyl groups in 3-sn-phosphoglycerides. The chain is Basic phospholipase A2 taipoxin alpha chain from Oxyuranus scutellatus scutellatus (Australian taipan).